A 133-amino-acid polypeptide reads, in one-letter code: Small ribosomal subunit protein uS9 (133 aa).

The protein belongs to the universal ribosomal protein uS9 family.

In Ureaplasma parvum serovar 3 (strain ATCC 700970), this protein is Small ribosomal subunit protein uS9.